The chain runs to 462 residues: Bifunctional protein GlmU (462 aa).

Residues M1–R230 are pyrophosphorylase. Residues L9–G12, K23, Q73, G78–T79, S101–D103, G140, E155, N170, and N228 each bind UDP-N-acetyl-alpha-D-glucosamine. D103 contacts Mg(2+). Residue N228 participates in Mg(2+) binding. A linker region spans residues V231 to N251. The tract at residues G252–Q462 is N-acetyltransferase. Positions 333 and 351 each coordinate UDP-N-acetyl-alpha-D-glucosamine. H363 (proton acceptor) is an active-site residue. 2 residues coordinate UDP-N-acetyl-alpha-D-glucosamine: Y366 and N377. Acetyl-CoA contacts are provided by residues N386 to Y387, S405, A423, and R440.

In the N-terminal section; belongs to the N-acetylglucosamine-1-phosphate uridyltransferase family. The protein in the C-terminal section; belongs to the transferase hexapeptide repeat family. As to quaternary structure, homotrimer. Mg(2+) serves as cofactor.

It is found in the cytoplasm. It catalyses the reaction alpha-D-glucosamine 1-phosphate + acetyl-CoA = N-acetyl-alpha-D-glucosamine 1-phosphate + CoA + H(+). The enzyme catalyses N-acetyl-alpha-D-glucosamine 1-phosphate + UTP + H(+) = UDP-N-acetyl-alpha-D-glucosamine + diphosphate. The protein operates within nucleotide-sugar biosynthesis; UDP-N-acetyl-alpha-D-glucosamine biosynthesis; N-acetyl-alpha-D-glucosamine 1-phosphate from alpha-D-glucosamine 6-phosphate (route II): step 2/2. It participates in nucleotide-sugar biosynthesis; UDP-N-acetyl-alpha-D-glucosamine biosynthesis; UDP-N-acetyl-alpha-D-glucosamine from N-acetyl-alpha-D-glucosamine 1-phosphate: step 1/1. It functions in the pathway bacterial outer membrane biogenesis; LPS lipid A biosynthesis. Its function is as follows. Catalyzes the last two sequential reactions in the de novo biosynthetic pathway for UDP-N-acetylglucosamine (UDP-GlcNAc). The C-terminal domain catalyzes the transfer of acetyl group from acetyl coenzyme A to glucosamine-1-phosphate (GlcN-1-P) to produce N-acetylglucosamine-1-phosphate (GlcNAc-1-P), which is converted into UDP-GlcNAc by the transfer of uridine 5-monophosphate (from uridine 5-triphosphate), a reaction catalyzed by the N-terminal domain. The polypeptide is Bifunctional protein GlmU (Latilactobacillus sakei subsp. sakei (strain 23K) (Lactobacillus sakei subsp. sakei)).